The chain runs to 80 residues: MKTGIKKIKLHVKKNDDVVVIAGNDKGKSGKVLKVFPQKGRVIVEGVNIRKRHMRPTQTSPQGSIIEREFPIHASNVKKS.

This sequence belongs to the universal ribosomal protein uL24 family. In terms of assembly, part of the 50S ribosomal subunit.

One of two assembly initiator proteins, it binds directly to the 5'-end of the 23S rRNA, where it nucleates assembly of the 50S subunit. In terms of biological role, one of the proteins that surrounds the polypeptide exit tunnel on the outside of the subunit. This Chlorobaculum parvum (strain DSM 263 / NCIMB 8327) (Chlorobium vibrioforme subsp. thiosulfatophilum) protein is Large ribosomal subunit protein uL24.